The following is a 250-amino-acid chain: Ribosomal RNA small subunit methyltransferase G (250 aa).

Residues glycine 78, leucine 83, 129 to 130 (AE), and arginine 144 each bind S-adenosyl-L-methionine. Residues 224 to 250 (IAAPRKRGGQQRRAGHARGTSNRRRGT) form a disordered region. Residues 227–250 (PRKRGGQQRRAGHARGTSNRRRGT) are compositionally biased toward basic residues.

It belongs to the methyltransferase superfamily. RNA methyltransferase RsmG family.

The protein resides in the cytoplasm. Functionally, specifically methylates the N7 position of guanine in position 518 of 16S rRNA. This Nocardioides sp. (strain ATCC BAA-499 / JS614) protein is Ribosomal RNA small subunit methyltransferase G.